We begin with the raw amino-acid sequence, 397 residues long: RNA polymerase II elongation factor ELL3 (397 aa).

Disordered stretches follow at residues 164-219 (VSDP…KRSV) and 237-284 (VPSP…PEDI). The span at 168-178 (LASNQGQSLPG) shows a compositional bias: polar residues. Residues 250-262 (QEGEDWEQEDEDM) are compositionally biased toward acidic residues. Over residues 269–281 (SSSVQEDSESPSP) the composition is skewed to low complexity. Positions 285–395 (PDYLLQYRAI…LILEFEEKNR (111 aa)) constitute an OCEL domain.

The protein belongs to the ELL/occludin family. As to quaternary structure, interacts with AFF4. Component of the super elongation complex (SEC), at least composed of EAF1, EAF2, CDK9, MLLT3/AF9, AFF (AFF1 or AFF4), the P-TEFb complex and ELL (ELL, ELL2 or ELL3). Component of the little elongation complex (LEC), at least composed of ELL (ELL, ELL2 or ELL3), ZC3H8, ICE1 and ICE2. Testis specific.

Its subcellular location is the nucleus. In terms of biological role, enhancer-binding elongation factor that specifically binds enhancers in embryonic stem cells (ES cells), marks them, and is required for their future activation during stem cell specification. Does not only bind to enhancer regions of active genes, but also marks the enhancers that are in a poised or inactive state in ES cells and is required for establishing proper RNA polymerase II occupancy at developmentally regulated genes in a cohesin-dependent manner. Probably required for priming developmentally regulated genes for later recruitment of the super elongation complex (SEC), for transcriptional activation during differentiation. Required for recruitment of P-TEFb within SEC during differentiation. Probably preloaded on germ cell chromatin, suggesting that it may prime gene activation by marking enhancers as early as in the germ cells. Promoting epithelial-mesenchymal transition (EMT). Elongation factor component of the super elongation complex (SEC), a complex required to increase the catalytic rate of RNA polymerase II transcription by suppressing transient pausing by the polymerase at multiple sites along the DNA. Component of the little elongation complex (LEC), a complex required to regulate small nuclear RNA (snRNA) gene transcription by RNA polymerase II and III. This Homo sapiens (Human) protein is RNA polymerase II elongation factor ELL3 (ELL3).